The chain runs to 111 residues: Probable 4-amino-4-deoxy-L-arabinose-phosphoundecaprenol flippase subunit ArnE (111 aa).

Transmembrane regions (helical) follow at residues 38-58 (LWLG…LLVL), 61-81 (LPVG…TLAA), and 91-111 (PRHW…GSAA). Positions 40 to 109 (LGLALICMGA…IISGIIILGS (70 aa)) constitute an EamA domain.

Belongs to the ArnE family. Heterodimer of ArnE and ArnF.

It is found in the cell inner membrane. The protein operates within bacterial outer membrane biogenesis; lipopolysaccharide biosynthesis. Its function is as follows. Translocates 4-amino-4-deoxy-L-arabinose-phosphoundecaprenol (alpha-L-Ara4N-phosphoundecaprenol) from the cytoplasmic to the periplasmic side of the inner membrane. This is Probable 4-amino-4-deoxy-L-arabinose-phosphoundecaprenol flippase subunit ArnE from Salmonella newport (strain SL254).